A 77-amino-acid polypeptide reads, in one-letter code: Large ribosomal subunit protein eL20 (77 aa).

This sequence belongs to the eukaryotic ribosomal protein eL20 family. Part of the 50S ribosomal subunit. Binds 23S rRNA.

The polypeptide is Large ribosomal subunit protein eL20 (Pyrococcus furiosus (strain ATCC 43587 / DSM 3638 / JCM 8422 / Vc1)).